Reading from the N-terminus, the 200-residue chain is Dephospho-CoA kinase (200 aa).

In terms of domain architecture, DPCK spans 4 to 200; that stretch reads TIGLTGSVAT…TFIERFVKNK (197 aa). 12 to 17 is an ATP binding site; sequence ATGKST.

Belongs to the CoaE family.

It is found in the cytoplasm. The enzyme catalyses 3'-dephospho-CoA + ATP = ADP + CoA + H(+). It participates in cofactor biosynthesis; coenzyme A biosynthesis; CoA from (R)-pantothenate: step 5/5. Catalyzes the phosphorylation of the 3'-hydroxyl group of dephosphocoenzyme A to form coenzyme A. This chain is Dephospho-CoA kinase, found in Listeria monocytogenes serovar 1/2a (strain ATCC BAA-679 / EGD-e).